A 321-amino-acid chain; its full sequence is D-alanine--D-alanine ligase (321 aa).

The ATP-grasp domain maps to 103-303 (KKILTPENIP…YVALCRMIVE (201 aa)). Residue 129 to 186 (PLPRPYVLKPVNEGSSVGVAIIDESFNDGQPIRKDQIDPWKNFKTLLAEPFIKGRELT) participates in ATP binding. Mg(2+)-binding residues include Asp254, Glu270, and Asn272.

It belongs to the D-alanine--D-alanine ligase family. The cofactor is Mg(2+). Requires Mn(2+) as cofactor.

The protein localises to the cytoplasm. The enzyme catalyses 2 D-alanine + ATP = D-alanyl-D-alanine + ADP + phosphate + H(+). The protein operates within cell wall biogenesis; peptidoglycan biosynthesis. In terms of biological role, cell wall formation. In Zymomonas mobilis subsp. mobilis (strain ATCC 31821 / ZM4 / CP4), this protein is D-alanine--D-alanine ligase.